A 396-amino-acid chain; its full sequence is Putative T-box protein 39 (396 aa).

A DNA-binding region (T-box) is located at residues 11-192 (MAEEDRWKQW…KNSTYGNRLD (182 aa)). The disordered stretch occupies residues 185-215 (STYGNRLDGGNKRKNTDSSEERTSKRSKNET). Basic and acidic residues predominate over residues 193–215 (GGNKRKNTDSSEERTSKRSKNET).

Its subcellular location is the nucleus. The polypeptide is Putative T-box protein 39 (tbx-39) (Caenorhabditis elegans).